The chain runs to 273 residues: Nucleotide-binding protein TT_C1664 (273 aa).

8–15 (GLSGAGKT) is an ATP binding site. 57–60 (DARA) contributes to the GTP binding site.

It belongs to the RapZ-like family.

Functionally, displays ATPase and GTPase activities. The polypeptide is Nucleotide-binding protein TT_C1664 (Thermus thermophilus (strain ATCC BAA-163 / DSM 7039 / HB27)).